A 307-amino-acid polypeptide reads, in one-letter code: Homoserine O-acetyltransferase (307 aa).

Catalysis depends on Cys142, which acts as the Acyl-thioester intermediate. The substrate site is built by Lys163 and Ser192. Residue His235 is the Proton acceptor of the active site. The active site involves Glu237. Arg249 contacts substrate.

It belongs to the MetA family.

It is found in the cytoplasm. The enzyme catalyses L-homoserine + acetyl-CoA = O-acetyl-L-homoserine + CoA. Its pathway is amino-acid biosynthesis; L-methionine biosynthesis via de novo pathway; O-acetyl-L-homoserine from L-homoserine: step 1/1. Its function is as follows. Transfers an acetyl group from acetyl-CoA to L-homoserine, forming acetyl-L-homoserine. This chain is Homoserine O-acetyltransferase, found in Desulfitobacterium hafniense (strain Y51).